Consider the following 468-residue polypeptide: Protein C-ets-2 (468 aa).

The 86-residue stretch at 85–170 (ATFSGFQKEQ…EHLEQMIKEN (86 aa)) folds into the PNT domain. A phosphoserine mark is found at Ser-220 and Ser-225. A disordered region spans residues 262 to 290 (VNLLNNNSGKPKDHDSPENGGDSFESSDS). Ser-294, Ser-297, and Ser-300 each carry phosphoserine. A DNA-binding region (ETS) is located at residues 362–442 (IQLWQFLLEL…SGKRYVYRFV (81 aa)).

This sequence belongs to the ETS family. Phosphorylation by CDK10 at Ser-220 and Ser-225 creates a phosphodegron that targets ETS2 for proteasomal degradation.

Its subcellular location is the nucleus. In terms of biological role, transcription factor activating transcription. Binds specifically the GGA DNA motif in gene promoters and stimulates transcription of those genes. The polypeptide is Protein C-ets-2 (Ets2) (Mus musculus (Mouse)).